A 77-amino-acid polypeptide reads, in one-letter code: Conotoxin Cl6.12 (77 aa).

The N-terminal stretch at 1-20 (MKFYLLLTAALLLTAVIIEA) is a signal peptide. The propeptide occupies 21-36 (APTDHQDEARDLMREE). Intrachain disulfides connect C43/C58, C51/C62, and C57/C68.

As to expression, expressed by the venom duct.

It localises to the secreted. In Californiconus californicus (California cone), this protein is Conotoxin Cl6.12.